A 602-amino-acid chain; its full sequence is Elongation factor 4 (602 aa).

Positions 2 to 184 (KHIRNFSIIA…AIVAKVPAPR (183 aa)) constitute a tr-type G domain. GTP-binding positions include 14–19 (DHGKST) and 131–134 (NKMD).

This sequence belongs to the TRAFAC class translation factor GTPase superfamily. Classic translation factor GTPase family. LepA subfamily.

The protein localises to the cell inner membrane. It catalyses the reaction GTP + H2O = GDP + phosphate + H(+). Functionally, required for accurate and efficient protein synthesis under certain stress conditions. May act as a fidelity factor of the translation reaction, by catalyzing a one-codon backward translocation of tRNAs on improperly translocated ribosomes. Back-translocation proceeds from a post-translocation (POST) complex to a pre-translocation (PRE) complex, thus giving elongation factor G a second chance to translocate the tRNAs correctly. Binds to ribosomes in a GTP-dependent manner. The polypeptide is Elongation factor 4 (Verminephrobacter eiseniae (strain EF01-2)).